A 366-amino-acid chain; its full sequence is GTP cyclohydrolase 1 type 2 homolog (366 aa).

Positions 64, 65, 102, 326, and 329 each coordinate a divalent metal cation.

The protein belongs to the GTP cyclohydrolase I type 2/NIF3 family. Homohexamer.

The polypeptide is GTP cyclohydrolase 1 type 2 homolog (Staphylococcus epidermidis (strain ATCC 12228 / FDA PCI 1200)).